Reading from the N-terminus, the 184-residue chain is Elongation factor P (184 aa).

Belongs to the elongation factor P family.

It localises to the cytoplasm. The protein operates within protein biosynthesis; polypeptide chain elongation. Involved in peptide bond synthesis. Stimulates efficient translation and peptide-bond synthesis on native or reconstituted 70S ribosomes in vitro. Probably functions indirectly by altering the affinity of the ribosome for aminoacyl-tRNA, thus increasing their reactivity as acceptors for peptidyl transferase. The sequence is that of Elongation factor P from Albidiferax ferrireducens (strain ATCC BAA-621 / DSM 15236 / T118) (Rhodoferax ferrireducens).